Reading from the N-terminus, the 631-residue chain is Chaperone protein HtpG (631 aa).

Residues 1 to 338 (MILKEQETLG…CNDLPLNISR (338 aa)) are a; substrate-binding. The interval 339–554 (EMLQHNRITQ…SNNMTTHMAK (216 aa)) is b. Residues 555 to 631 (LIVASGQNKP…KLLNHDTIVN (77 aa)) are c.

Belongs to the heat shock protein 90 family. In terms of assembly, homodimer.

The protein localises to the cytoplasm. In terms of biological role, molecular chaperone. Has ATPase activity. This chain is Chaperone protein HtpG, found in Baumannia cicadellinicola subsp. Homalodisca coagulata.